The sequence spans 70 residues: Mu-agatoxin-Ao1a (70 aa).

The first 20 residues, 1 to 20 (MKAIIFFCFLSVMVFIVAEA), serve as a signal peptide directing secretion. The propeptide occupies 21–33 (SSLEALKIFEGER). Disulfide bonds link Cys-35/Cys-50, Cys-42/Cys-55, Cys-49/Cys-65, and Cys-57/Cys-63. Asparagine amide is present on Asn-69.

This sequence belongs to the neurotoxin 07 (Beta/delta-agtx) family. 04 (aga-5) subfamily. Expressed by the venom gland.

It localises to the secreted. In terms of biological role, insecticidal neurotoxin that modulates the insect Nav channel (DmNaV1/tipE (para/tipE)) in a unique manner, with both the activation and inactivation processes being affected. The voltage dependence of activation is shifted toward more hyperpolarized potentials (analogous to site 4 toxins) and a non-inactivating persistent sodium current is induced (site 3-like action). Interestingly, both effects take place in a voltage-dependent manner, producing a bell-shaped curve between -80 and 0 mV. This chain is Mu-agatoxin-Ao1a, found in Agelena orientalis (Funnel-web spider).